We begin with the raw amino-acid sequence, 434 residues long: Putative F-box/FBD/LRR-repeat protein At1g16940 (434 aa).

The F-box domain occupies 10-66; the sequence is HNIINQLPDSLLCEIFFNLPTEEVVKTSLICRRWRYVWQSLPGLDLVINGSKNYDKF. LRR repeat units lie at residues 72–99, 114–141, 164–189, 204–231, 252–277, and 306–331; these read FMFL…MMNN, RRYV…KLHR, INFV…TMDK, CLTN…KLNR, DVAY…TISF, and MAVG…VMGF. Residues 336 to 385 enclose the FBD domain; the sequence is WGINFSDVPQCVLSSLEFVEVKAREVADMKKLWSYFMENSTVLKKFTLCL.

This Arabidopsis thaliana (Mouse-ear cress) protein is Putative F-box/FBD/LRR-repeat protein At1g16940.